Consider the following 302-residue polypeptide: Nucleotide-binding protein Strop_3101 (302 aa).

ATP is bound at residue 26–33 (GVSGGGRS). 77–80 (DVRS) contacts GTP.

Belongs to the RapZ-like family.

In terms of biological role, displays ATPase and GTPase activities. The protein is Nucleotide-binding protein Strop_3101 of Salinispora tropica (strain ATCC BAA-916 / DSM 44818 / JCM 13857 / NBRC 105044 / CNB-440).